The chain runs to 201 residues: L-rhamnose-binding lectin SML (201 aa).

Disulfide bonds link Cys10/Cys40, Cys20/Cys99, Cys54/Cys86, Cys67/Cys73, Cys108/Cys138, Cys117/Cys195, Cys152/Cys182, and Cys163/Cys169. SUEL-type lectin domains follow at residues 18–100 (LSCD…YNCF) and 107–196 (TCEH…YVCQ). The N-linked (GlcNAc...) asparagine glycan is linked to Asn168.

In terms of assembly, homodimer; non-covalently linked.

Functionally, rhamnose-binding lectin. Also binds melibiose, raffinose, D-galactose, L-arabinose, D-fucose, maltose and D-glucose with decreasing affinity. Does not bind D-arabinose, L-fucose, lactose, xylose or 2-deoxy-D-galactose. Shows strong hemagglutinating activity against rabbit erythrocytes. This Scomberomorus niphonius (Japanese Spanish mackerel) protein is L-rhamnose-binding lectin SML.